The following is a 495-amino-acid chain: Probable cytosol aminopeptidase (495 aa).

Mn(2+) contacts are provided by Lys258 and Asp263. The active site involves Lys270. Asp281, Asp340, and Glu342 together coordinate Mn(2+). Arg344 is a catalytic residue.

Belongs to the peptidase M17 family. The cofactor is Mn(2+).

It localises to the cytoplasm. It carries out the reaction Release of an N-terminal amino acid, Xaa-|-Yaa-, in which Xaa is preferably Leu, but may be other amino acids including Pro although not Arg or Lys, and Yaa may be Pro. Amino acid amides and methyl esters are also readily hydrolyzed, but rates on arylamides are exceedingly low.. It catalyses the reaction Release of an N-terminal amino acid, preferentially leucine, but not glutamic or aspartic acids.. Its function is as follows. Presumably involved in the processing and regular turnover of intracellular proteins. Catalyzes the removal of unsubstituted N-terminal amino acids from various peptides. The sequence is that of Probable cytosol aminopeptidase from Leptospira interrogans serogroup Icterohaemorrhagiae serovar Lai (strain 56601).